A 295-amino-acid chain; its full sequence is Ethanolamine ammonia-lyase small subunit (295 aa).

Adenosylcob(III)alamin contacts are provided by valine 207, glutamate 228, and cysteine 258.

The protein belongs to the EutC family. In terms of assembly, the basic unit is a heterodimer which dimerizes to form tetramers. The heterotetramers trimerize; 6 large subunits form a core ring with 6 small subunits projecting outwards. Adenosylcob(III)alamin is required as a cofactor.

The protein resides in the bacterial microcompartment. The catalysed reaction is ethanolamine = acetaldehyde + NH4(+). It functions in the pathway amine and polyamine degradation; ethanolamine degradation. Its function is as follows. Catalyzes the deamination of various vicinal amino-alcohols to oxo compounds. Allows this organism to utilize ethanolamine as the sole source of nitrogen and carbon in the presence of external vitamin B12. In Escherichia coli (strain SMS-3-5 / SECEC), this protein is Ethanolamine ammonia-lyase small subunit.